The primary structure comprises 132 residues: Interleukin-13 (132 aa).

Positions 1–18 are cleaved as a signal peptide; it reads MALLLTTVIALTCLGGFA. N-linked (GlcNAc...) asparagine glycosylation is found at asparagine 38, asparagine 49, asparagine 57, and asparagine 72. Intrachain disulfides connect cysteine 48-cysteine 76 and cysteine 64-cysteine 90.

This sequence belongs to the IL-4/IL-13 family. Interacts with IL13RA2.

The protein localises to the secreted. Its function is as follows. Cytokine that plays important roles in allergic inflammation and immune response to parasite infection. Synergizes with IL2 in regulating interferon-gamma synthesis. Stimulates B-cell proliferation, and activation of eosinophils, basophils, and mast cells. Plays an important role in controlling IL33 activity by modulating the production of transmembrane and soluble forms of interleukin-1 receptor-like 1/IL1RL1. Displays the capacity to antagonize Th1-driven proinflammatory immune response and downregulates synthesis of many proinflammatory cytokines including IL1, IL6, IL10, IL12 and TNF-alpha through a mechanism that partially involves suppression of NF-kappa-B. Also functions on nonhematopoietic cells, including endothelial cells where it induces vascular cell adhesion protein 1/VCAM1, which is important in the recruitment of eosinophils. Exerts its biological effects through its receptors which comprises the IL4R chain and the IL13RA1 chain, to activate JAK1 and TYK2, leading to the activation of STAT6. Aside from IL13RA1, another receptor IL13RA2 acts as a high affinity decoy for IL13 and mediates internalization and depletion of extracellular IL13. This Macaca mulatta (Rhesus macaque) protein is Interleukin-13 (IL13).